The primary structure comprises 419 residues: O-methyltransferase gsfB (419 aa).

Residues 255–256 (GG), D278, 300–301 (DF), and R316 each bind S-adenosyl-L-methionine. H320 functions as the Proton acceptor in the catalytic mechanism.

The protein belongs to the class I-like SAM-binding methyltransferase superfamily. Cation-independent O-methyltransferase family.

It catalyses the reaction 2-(2,4-dihydroxy-6-oxidobenzoyl)-5-hydroxy-3-methylbenzenolate + S-adenosyl-L-methionine = griseophenone D + S-adenosyl-L-homocysteine + H(+). The protein operates within secondary metabolite biosynthesis; terpenoid biosynthesis. Its function is as follows. O-methyltransferase; part of the gene cluster that mediates the biosynthesis of griseofulvin, an important antifungal drug that has been in use for a long time for treating dermatophyte infections. The first step of the pathway is the formation of the heptaketide backbone by gsfA which is initiated by priming with acetyl-CoA, followed by sequential condensations of 6 malonyl-CoA units. The resulting benzophenone can undergo a spontaneous dehydration to form norlichexanthone. However, the true precursor for the griseofulvin biosynthesis is not norlichexanthone, but the heptaketide benzophenone that is O-methylated at 3-OH by gsfB to produce griseophenone D which is further methylated at 9-OH by gsfC to yield griseophenone C. Griseophenone C is then substrate of halogenase gsfI which is responsible for the regio-specific chlorination at the C13 position to form griseophenone B. The cytochrome P450 gsfF catalyzes the coupling of orcinol and phloroglucinol rings in griseophenone B to form desmethyl-dehydrogriseofulvin A which is further methylated at 5-OH by gsfD to yield dehydrogriseofulvin. Finally, gsfE performs stereospecific reduction of enone 18 of dehydrogriseofulvin to afford the final product griseofulvin. This Penicillium aethiopicum protein is O-methyltransferase gsfB.